The sequence spans 307 residues: Pantothenate kinase (307 aa).

90 to 97 (GSVAVGKS) serves as a coordination point for ATP.

Belongs to the prokaryotic pantothenate kinase family.

Its subcellular location is the cytoplasm. It carries out the reaction (R)-pantothenate + ATP = (R)-4'-phosphopantothenate + ADP + H(+). It participates in cofactor biosynthesis; coenzyme A biosynthesis; CoA from (R)-pantothenate: step 1/5. The chain is Pantothenate kinase from Levilactobacillus brevis (strain ATCC 367 / BCRC 12310 / CIP 105137 / JCM 1170 / LMG 11437 / NCIMB 947 / NCTC 947) (Lactobacillus brevis).